A 332-amino-acid polypeptide reads, in one-letter code: Phosphate acyltransferase (332 aa).

The protein belongs to the PlsX family. Homodimer. Probably interacts with PlsY.

Its subcellular location is the cytoplasm. The catalysed reaction is a fatty acyl-[ACP] + phosphate = an acyl phosphate + holo-[ACP]. It participates in lipid metabolism; phospholipid metabolism. Catalyzes the reversible formation of acyl-phosphate (acyl-PO(4)) from acyl-[acyl-carrier-protein] (acyl-ACP). This enzyme utilizes acyl-ACP as fatty acyl donor, but not acyl-CoA. In Clostridium novyi (strain NT), this protein is Phosphate acyltransferase.